Here is a 207-residue protein sequence, read N- to C-terminus: Killer cell lectin-like receptor subfamily F member 2 (207 aa).

The Cytoplasmic portion of the chain corresponds to 1-30; that stretch reads MENEDGYMTLSFKNRCKSKQKSKDFSLYPQ. Y7 carries the post-translational modification Phosphotyrosine. Residues 31-51 form a helical; Signal-anchor for type II membrane protein membrane-spanning segment; sequence YYCLLLIFGCIVILIFIMTGI. The Extracellular segment spans residues 52–207; the sequence is DLKFWHKKMD…ILTHNGTSGV (156 aa). Residue N67 is glycosylated (N-linked (GlcNAc...) asparagine). 3 disulfide bridges follow: C78/C89, C106/C193, and C172/C185. The 110-residue stretch at 85-194 folds into the C-type lectin domain; the sequence is NEGKCYWFST…CSSTFKGICQ (110 aa). Residue N202 is glycosylated (N-linked (GlcNAc...) asparagine).

As to quaternary structure, homodimer; non-disulfide-linked. Interacts with CLEC2A. N-glycosylated.

It is found in the cell membrane. Its function is as follows. C-type lectin-like receptor involved in natural killer cell mediated cytotoxicity and cytokine secretion in keratinocytes via its interaction with CLEC2A. Triggers degranulation in a SYK-dependent manner and stimulates SYK phosphotyrosinylation without recruiting SYK directly. The chain is Killer cell lectin-like receptor subfamily F member 2 (KLRF2) from Homo sapiens (Human).